The following is a 910-amino-acid chain: Staphylococcal nuclease domain-containing protein 1 (910 aa).

At Ala2 the chain carries N-acetylalanine. TNase-like domains are found at residues 18–166 (TVQR…MWSE), 193–328 (KPVN…IWRD), and 341–496 (KQFV…LHSK). Thr103 is subject to Phosphothreonine. Lys193 carries the N6-acetyllysine modification. Thr240 bears the Phosphothreonine mark. Short sequence motifs (nuclear localization signal) lie at residues 321–325 (RRLRI) and 388–392 (KKLRP). A Phosphoserine modification is found at Ser426. Lys513 participates in a covalent cross-link: Glycyl lysine isopeptide (Lys-Gly) (interchain with G-Cter in SUMO2). The TNase-like 4 domain maps to 525–660 (GRSEAVVEYV…KQKKEKVWAH (136 aa)). Lys641 carries the post-translational modification N6-acetyllysine. At Ser645 the chain carries Phosphoserine. Residues 729–787 (APRRGEFCIAKFVDGEWYRARVEKVESPAKVHVFYIDYGNREILPSTRLGTLPPAFSTR) enclose the Tudor domain. Thr779 bears the Phosphothreonine mark. Residues Ser785 and Ser909 each carry the phosphoserine modification.

In terms of assembly, forms a ternary complex with STAT6 and POLR2A. Associates with the RNA-induced silencing complex (RISC). Interacts with the RISC components AGO2, FMR1 and TNRC6A. Interacts with GTF2E1 and GTF2E2. Interacts with PIM1. Interacts with STAT5. Interacts with SYT11 (via C2 2 domain); the interaction with SYT11 is direct. Phosphorylated by PIM1 in vitro. As to expression, in lactating cows highly expressed in mammary epithelial cells.

It localises to the cytoplasm. Its subcellular location is the nucleus. The protein localises to the melanosome. It catalyses the reaction Endonucleolytic cleavage to nucleoside 3'-phosphates and 3'-phosphooligonucleotide end-products.. Endonuclease that mediates miRNA decay of both protein-free and AGO2-loaded miRNAs. As part of its function in miRNA decay, regulates mRNAs involved in G1-to-S phase transition. Functions as a bridging factor between STAT6 and the basal transcription factor. Plays a role in PIM1 regulation of MYB activity. Functions as a transcriptional coactivator for STAT5. The protein is Staphylococcal nuclease domain-containing protein 1 (SND1) of Bos taurus (Bovine).